The primary structure comprises 640 residues: 1,4-alpha-glucan branching enzyme GlgB (640 aa).

The active-site Nucleophile is aspartate 317. The Proton donor role is filled by glutamate 370.

This sequence belongs to the glycosyl hydrolase 13 family. GlgB subfamily. As to quaternary structure, monomer.

It catalyses the reaction Transfers a segment of a (1-&gt;4)-alpha-D-glucan chain to a primary hydroxy group in a similar glucan chain.. It functions in the pathway glycan biosynthesis; glycogen biosynthesis. Its function is as follows. Catalyzes the formation of the alpha-1,6-glucosidic linkages in glycogen by scission of a 1,4-alpha-linked oligosaccharide from growing alpha-1,4-glucan chains and the subsequent attachment of the oligosaccharide to the alpha-1,6 position. This Nitratidesulfovibrio vulgaris (strain ATCC 29579 / DSM 644 / CCUG 34227 / NCIMB 8303 / VKM B-1760 / Hildenborough) (Desulfovibrio vulgaris) protein is 1,4-alpha-glucan branching enzyme GlgB.